The following is a 190-amino-acid chain: MTVGVLALQGAFIEHETMLQGLGVATLQVRLPEQLVQVERLIIPGGESTTIGKLLVRFDLLEPIQQRAAEGMPIWGTCAGMILLAKEIAEGRVEGQPALGLMDITARRNAFGRQVDSFETNLQVPVLGEAPFHAVFIRAPQIDKVGEAVETLASLDDGRIVAARQGKLLATAFHPELTGDARFHELFLGL.

46–48 (GES) provides a ligand contact to L-glutamine. Cysteine 78 functions as the Nucleophile in the catalytic mechanism. Residues arginine 108 and 137-138 (IR) each bind L-glutamine. Catalysis depends on charge relay system residues histidine 174 and glutamate 176.

The protein belongs to the glutaminase PdxT/SNO family. As to quaternary structure, in the presence of PdxS, forms a dodecamer of heterodimers. Only shows activity in the heterodimer.

It catalyses the reaction aldehydo-D-ribose 5-phosphate + D-glyceraldehyde 3-phosphate + L-glutamine = pyridoxal 5'-phosphate + L-glutamate + phosphate + 3 H2O + H(+). It carries out the reaction L-glutamine + H2O = L-glutamate + NH4(+). It functions in the pathway cofactor biosynthesis; pyridoxal 5'-phosphate biosynthesis. Its function is as follows. Catalyzes the hydrolysis of glutamine to glutamate and ammonia as part of the biosynthesis of pyridoxal 5'-phosphate. The resulting ammonia molecule is channeled to the active site of PdxS. This is Pyridoxal 5'-phosphate synthase subunit PdxT from Herpetosiphon aurantiacus (strain ATCC 23779 / DSM 785 / 114-95).